Here is a 950-residue protein sequence, read N- to C-terminus: UvrABC system protein A (950 aa).

Residue 42 to 49 (GLSGSGKS) coordinates ATP. Residues 262–289 (CPVCSYSLPELEPRLFSFNNPMGSCPTC) form a C4-type zinc finger. 2 ABC transporter domains span residues 319 to 596 (WDKR…EKSV) and 616 to 945 (VNPG…KYLK). Residue 649–656 (GVSGSGKS) coordinates ATP. The C4-type zinc-finger motif lies at 748–774 (CEACQGDGVIKVEMHFLPDVYVPCEVC).

Belongs to the ABC transporter superfamily. UvrA family. In terms of assembly, forms a heterotetramer with UvrB during the search for lesions.

The protein resides in the cytoplasm. In terms of biological role, the UvrABC repair system catalyzes the recognition and processing of DNA lesions. UvrA is an ATPase and a DNA-binding protein. A damage recognition complex composed of 2 UvrA and 2 UvrB subunits scans DNA for abnormalities. When the presence of a lesion has been verified by UvrB, the UvrA molecules dissociate. The sequence is that of UvrABC system protein A from Neisseria gonorrhoeae.